The sequence spans 321 residues: Glucokinase (321 aa).

Gly8 to Thr13 serves as a coordination point for ATP.

Belongs to the bacterial glucokinase family.

The protein localises to the cytoplasm. The enzyme catalyses D-glucose + ATP = D-glucose 6-phosphate + ADP + H(+). The chain is Glucokinase from Shigella dysenteriae serotype 1 (strain Sd197).